Consider the following 394-residue polypeptide: NAD(P)H-quinone oxidoreductase subunit H (394 aa).

Belongs to the complex I 49 kDa subunit family. NDH-1 can be composed of about 15 different subunits; different subcomplexes with different compositions have been identified which probably have different functions.

It localises to the cellular thylakoid membrane. It carries out the reaction a plastoquinone + NADH + (n+1) H(+)(in) = a plastoquinol + NAD(+) + n H(+)(out). The enzyme catalyses a plastoquinone + NADPH + (n+1) H(+)(in) = a plastoquinol + NADP(+) + n H(+)(out). Its function is as follows. NDH-1 shuttles electrons from an unknown electron donor, via FMN and iron-sulfur (Fe-S) centers, to quinones in the respiratory and/or the photosynthetic chain. The immediate electron acceptor for the enzyme in this species is believed to be plastoquinone. Couples the redox reaction to proton translocation, and thus conserves the redox energy in a proton gradient. Cyanobacterial NDH-1 also plays a role in inorganic carbon-concentration. This chain is NAD(P)H-quinone oxidoreductase subunit H, found in Prochlorococcus marinus (strain MIT 9211).